Reading from the N-terminus, the 260-residue chain is uncharacterized protein (260 aa).

Residues 1 to 38 (MNWTREIEQYKQVVASYKLKMKRMEMKISDISEEKRQS) adopt a coiled-coil conformation.

This is an uncharacterized protein from Caenorhabditis elegans.